The chain runs to 515 residues: Probable cytosol aminopeptidase (515 aa).

Residues K279 and D284 each contribute to the Mn(2+) site. Residue K291 is part of the active site. Residues D302, D361, and E363 each contribute to the Mn(2+) site. The active site involves R365.

The protein belongs to the peptidase M17 family. Requires Mn(2+) as cofactor.

The protein resides in the cytoplasm. It carries out the reaction Release of an N-terminal amino acid, Xaa-|-Yaa-, in which Xaa is preferably Leu, but may be other amino acids including Pro although not Arg or Lys, and Yaa may be Pro. Amino acid amides and methyl esters are also readily hydrolyzed, but rates on arylamides are exceedingly low.. It catalyses the reaction Release of an N-terminal amino acid, preferentially leucine, but not glutamic or aspartic acids.. Presumably involved in the processing and regular turnover of intracellular proteins. Catalyzes the removal of unsubstituted N-terminal amino acids from various peptides. This chain is Probable cytosol aminopeptidase, found in Mycobacterium bovis (strain ATCC BAA-935 / AF2122/97).